The chain runs to 604 residues: Protein glass (604 aa).

Disordered stretches follow at residues 111–139 (ISTTPPASSGNGSSNNGAGGGSSGNHGYW), 199–237 (NSHNHGQMHSQHQQHQHQQSQVQASHVGNSLLQSSGGNN), 359–400 (LPPL…SPTS), and 414–434 (EDEEDSNEDLDGDEGSSGGEM). Composition is skewed to low complexity over residues 117-126 (ASSGNGSSNN) and 200-237 (SHNHGQMHSQHQQHQHQQSQVQASHVGNSLLQSSGGNN). Residues 414–427 (EDEEDSNEDLDGDE) are compositionally biased toward acidic residues. 5 C2H2-type zinc fingers span residues 437–459 (NLCRLCGKTYARPSTLKTHLRTH), 465–487 (YRCPDCNKSFSQAANLTAHVRTH), 493–515 (FRCPICDRRFSQSSSVTTHMRTH), 521–543 (YRCSSCKKSFSDSSTLTKHLRIH), and 549–571 (YQCKLCLLRFSQSGNLNRHMRVH). The interval 566-604 (RHMRVHGNNNSSNGSNGATGVGGESSTGSGVGGGNSLLT) is disordered. Positions 572 to 581 (GNNNSSNGSN) are enriched in low complexity. Over residues 582 to 604 (GATGVGGESSTGSGVGGGNSLLT) the composition is skewed to gly residues.

The protein resides in the nucleus. Its function is as follows. Transcription factor required for gene expression specific to photoreceptor cells. The protein is Protein glass (gl) of Drosophila melanogaster (Fruit fly).